The chain runs to 517 residues: PSTB2-interacting protein 1 (517 aa).

As to quaternary structure, interacts with PDR17/PSTB2 and SCS2.

Its function is as follows. Phosphatidic acid-binding protein involved in interorganelle phosphatidylserine (PtdSer) transport. Linkks a PtdSer donor membrane (via binding of SCS2 and phosphatidic acid present in the donor membrane) with an acceptor membrane (via its interaction with PDR17), forming a zone of apposition that facilitates PtdSer transfer. This chain is PSTB2-interacting protein 1, found in Saccharomyces cerevisiae (strain ATCC 204508 / S288c) (Baker's yeast).